Consider the following 427-residue polypeptide: Trigger factor (427 aa).

In terms of domain architecture, PPIase FKBP-type spans G163–P248.

It belongs to the FKBP-type PPIase family. Tig subfamily.

Its subcellular location is the cytoplasm. It catalyses the reaction [protein]-peptidylproline (omega=180) = [protein]-peptidylproline (omega=0). Involved in protein export. Acts as a chaperone by maintaining the newly synthesized protein in an open conformation. Functions as a peptidyl-prolyl cis-trans isomerase. The sequence is that of Trigger factor from Streptococcus pneumoniae serotype 4 (strain ATCC BAA-334 / TIGR4).